Here is a 632-residue protein sequence, read N- to C-terminus: Eukaryotic peptide chain release factor GTP-binding subunit ERF3B (632 aa).

2 disordered regions span residues 1–31 and 162–200; these read MDLGSSSDSAPDCWDQVDMEAPGSAPSGDGI and SEAKPEASLGDAGPPEESVKEVMEEKEEVRKSKSVSIPS. The segment covering 178-192 has biased composition (basic and acidic residues); that stretch reads ESVKEVMEEKEEVRK. In terms of domain architecture, tr-type G spans 205–429; sequence KEHVNVVFIG…YLDSLPNFNR (225 aa). A G1 region spans residues 214 to 221; sequence GHVDAGKS. GTP is bound at residue 217 to 222; the sequence is DAGKST. Residues 270-274 form a G2 region; the sequence is GKTVE. Positions 291 to 294 are G3; the sequence is DAPG. Residues 353–356 and 395–397 contribute to the GTP site; these read NKMD and SGL. The segment at 353 to 356 is G4; it reads NKMD. The tract at residues 395–397 is G5; sequence SGL.

It belongs to the TRAFAC class translation factor GTPase superfamily. Classic translation factor GTPase family. ERF3 subfamily. Component of the eRF1-eRF3-GTP ternary complex, composed of ETF1/ERF1 and ERF3 (GSPT1/ERF3A or GSPT2/ERF3B) and GTP. Component of the transient SURF (SMG1-UPF1-eRF1-eRF3) complex. Interacts with UPF1 and PABPC1. Highly expressed in brain. Moderately expressed in spleen and lung. Weakly expressed in heart, liver and kidney. Expression during the cell-cycle progression is constant.

It is found in the cytoplasm. It catalyses the reaction GTP + H2O = GDP + phosphate + H(+). In terms of biological role, GTPase component of the eRF1-eRF3-GTP ternary complex, a ternary complex that mediates translation termination in response to the termination codons UAA, UAG and UGA. GSPT2/ERF3B mediates ETF1/ERF1 delivery to stop codons: The eRF1-eRF3-GTP complex binds to a stop codon in the ribosomal A-site. GTP hydrolysis by GSPT2/ERF3B induces a conformational change that leads to its dissociation, permitting ETF1/ERF1 to accommodate fully in the A-site. Component of the transient SURF complex which recruits UPF1 to stalled ribosomes in the context of nonsense-mediated decay (NMD) of mRNAs containing premature stop codons. In Mus musculus (Mouse), this protein is Eukaryotic peptide chain release factor GTP-binding subunit ERF3B (Gspt2).